Here is a 2472-residue protein sequence, read N- to C-terminus: Highly reducing polyketide synthase xilA (2472 aa).

The region spanning 1-417 is the Ketosynthase family 3 (KS3) domain; sequence MPGGVRDLPA…GTNGHCIIDD (417 aa). Active-site for beta-ketoacyl synthase activity residues include cysteine 162, histidine 298, and histidine 340. Positions 442–502 are disordered; the sequence is NDINGKSGTN…QRKHHHPKTD (61 aa). A compositionally biased stretch (low complexity) spans 450–489; that stretch reads TNGANGANRVNGVNGVNGVNGVNGANGHSNASLLSNGSNN. Residues 597–932 form the Malonyl-CoA:ACP transacylase (MAT) domain; sequence FIFTGQGAQW…CTGTLFVHNV (336 aa). Positions 991–1129 are N-terminal hotdog fold; that stretch reads HDLLGSKVPG…GQIKVEVAKF (139 aa). Residues 991–1294 enclose the PKS/mFAS DH domain; sequence HDLLGSKVPG…FTSLNNEQES (304 aa). Histidine 1023 serves as the catalytic Proton acceptor; for dehydratase activity. The tract at residues 1141–1294 is C-terminal hotdog fold; it reads GRLVDAQTWY…FTSLNNEQES (154 aa). Catalysis depends on aspartate 1207, which acts as the Proton donor; for dehydratase activity. The methyltransferase (CMeT) domain stretch occupies residues 1289 to 1505; sequence NNEQESPSTG…IITVHALRSI (217 aa). The region spanning 1724 to 2036 is the Enoyl reductase (ER) domain; that stretch reads GLLTSLYFKP…KGTHIGKMVI (313 aa). Residues 2060-2239 form the Ketoreductase (KR) domain; sequence ASYILVGGLS…ATTVSLGFIK (180 aa). Positions 2391-2469 constitute a Carrier domain; it reads ETVKLVSDAI…SIARVIVEEA (79 aa). Position 2428 is an O-(pantetheine 4'-phosphoryl)serine (serine 2428).

Pantetheine 4'-phosphate serves as cofactor.

It participates in secondary metabolite biosynthesis. Highly reducing polyketide synthase; part of the gene cluster that mediates the biosynthesis of the 6-methyl-2-pyrone derivative xylariolide D. XilA produces the 5-alkyl-6-methyl-2-pyrone backbone called prexylariolide D via sequential condensations of 4 malonyl-CoA units with one acetyl-CoA starter unit. During the biosynthesis, the linear polyketide chain is branched by the addition of an acetyl unit as the origin of the methyl group at the 2-pyrone ring. Prexylariolide D is then hydroxylated at the side chain by xilC to form the final product, xylariolide D. The sequence is that of Highly reducing polyketide synthase xilA from Penicillium crustosum (Blue mold fungus).